The sequence spans 98 residues: Integration host factor subunit alpha (98 aa).

The tract at residues 54–74 is disordered; it reads LRDKSSRPGRNPKTGESVPVS.

This sequence belongs to the bacterial histone-like protein family. In terms of assembly, heterodimer of an alpha and a beta chain.

Its function is as follows. This protein is one of the two subunits of integration host factor, a specific DNA-binding protein that functions in genetic recombination as well as in transcriptional and translational control. The polypeptide is Integration host factor subunit alpha (ihfA) (Pasteurella multocida (strain Pm70)).